The sequence spans 1661 residues: Microtubule cross-linking factor 2 (1661 aa).

Residues 1 to 187 are disordered; the sequence is MEAPAAEPPV…EPSVAASSVG (187 aa). 2 stretches are compositionally biased toward low complexity: residues 76–94 and 133–149; these read AVAPGARGAGVRVAGVRTG and LLGLELALSSDAESAAG. Positions 167-176 are enriched in pro residues; that stretch reads QQPPRPPASP. Residues 211–240 are required for association with Golgi apparatus membrane; that stretch reads PSGLVRELEELRSENDYLKDEIEELRAEML. 2 coiled-coil regions span residues 218–281 and 310–351; these read LEEL…AERR and SMRL…LQTE. Positions 353-373 are disordered; that stretch reads ERPREHSLKKRGTRSLGKADK. Coiled coils occupy residues 450–484, 820–865, and 1083–1117; these read LKLVEEEANLLSRRIVELEVENRGLRAEMDDMKDH, IKEL…LKED, and SQEKLQLVERLQGEKQQVEQQVKELQNRLSQLQKA. Serine 1169 carries the phosphoserine modification. Residues 1196-1221 are disordered; sequence AFGFVSSEPGDPEKDTKEKPGLSSRD. A compositionally biased stretch (basic and acidic residues) spans 1206 to 1215; that stretch reads DPEKDTKEKP. Serine 1255 bears the Phosphoserine mark. Disordered stretches follow at residues 1432–1456, 1538–1563, and 1636–1661; these read RPCCSPKYGSPKLQRRSVSKLDSSK, RAPSPTSSAGEEGTKKPEPLSPASYH, and HSPSKCRLHPSESSWGGEERALPPSE. A compositionally biased stretch (basic and acidic residues) spans 1652–1661; sequence GEERALPPSE.

This sequence belongs to the MTCL family. As to quaternary structure, interacts with CLASP1 and CLASP2. The C-terminal 25 kDa form occurs as a monomer. Post-translationally, proteolytically cleaved in primary hepatocytes into a C-terminal 80 kDa form. Proteolytically cleaved into a C-terminal SOGA 25 kDa form that is detected in plasma. Phosphorylated during mitosis in a CDK1-dependent manner.

The protein resides in the cytoplasm. It is found in the cytoskeleton. Its subcellular location is the golgi apparatus membrane. It localises to the midbody. The protein localises to the secreted. Microtubule-associated factor that enables integration of the centrosomal and Golgi-associated microtubules on the Golgi membrane, supporting directional migration. Preferentially acts on the perinuclear microtubules accumulated around the Golgi. Associates with the Golgi membrane through the N-terminal coiled-coil region and directly binds microtubules through the C-terminal domain. Required for faithful chromosome segregation during mitosis. Regulates autophagy by playing a role in the reduction of glucose production in an adiponectin- and insulin-dependent manner. This Homo sapiens (Human) protein is Microtubule cross-linking factor 2.